Consider the following 142-residue polypeptide: Hemoglobin subunit alpha (142 aa).

Residues 2–142 (VLSPADKTNV…VSTVLTSKYR (141 aa)) enclose the Globin domain. S4 carries the post-translational modification Phosphoserine. K8 carries the N6-succinyllysine modification. T9 is modified (phosphothreonine). K12 is modified (N6-succinyllysine). K17 carries the post-translational modification N6-acetyllysine; alternate. Residue K17 is modified to N6-succinyllysine; alternate. Residue Y25 is modified to Phosphotyrosine. A Phosphoserine modification is found at S36. An N6-succinyllysine modification is found at K41. Residue S50 is modified to Phosphoserine. H59 contacts O2. Position 88 (H88) interacts with heme b. A Phosphoserine modification is found at S103. T109 is subject to Phosphothreonine. 2 positions are modified to phosphoserine: S125 and S132. Phosphothreonine occurs at positions 135 and 138. S139 carries the post-translational modification Phosphoserine.

It belongs to the globin family. Heterotetramer of two alpha chains and two beta chains. As to expression, red blood cells.

In terms of biological role, involved in oxygen transport from the lung to the various peripheral tissues. Functionally, hemopressin acts as an antagonist peptide of the cannabinoid receptor CNR1. Hemopressin-binding efficiently blocks cannabinoid receptor CNR1 and subsequent signaling. This is Hemoglobin subunit alpha (HBA) from Piliocolobus badius (Western red colobus).